Consider the following 403-residue polypeptide: RILP-like protein 1 (403 aa).

The residue at position 7 (Ser-7) is a Phosphoserine. Residues Ala-10–Lys-97 form the RH1 domain. Residue Cys-47 is modified to S-nitrosocysteine. The stretch at Glu-76–Glu-265 forms a coiled coil. The region spanning Arg-291–Leu-356 is the RH2 domain. The tract at residues Glu-329 to Gln-348 is disordered.

It belongs to the RILPL family. In terms of assembly, interacts (when S-nitrosylated) with GAPDH. Interacts with RAB8A; interaction is dependent on the phosphorylation of 'Thr-72' of RAB8A. Interacts with RAB10 and RAB12; the interaction is dependent on the phosphorylation of 'Thr-73' of RAB10, and 'Ser-105' of RAB12. In terms of processing, S-nitrosylation is required for the interaction with GAPDH.

It localises to the cytoplasm. The protein resides in the cytosol. The protein localises to the cytoskeleton. It is found in the microtubule organizing center. Its subcellular location is the centrosome. It localises to the centriole. The protein resides in the cilium basal body. Its function is as follows. Plays a role in the regulation of cell shape and polarity. Plays a role in cellular protein transport, including protein transport away from primary cilia. Neuroprotective protein, which acts by sequestring GAPDH in the cytosol and prevent the apoptotic function of GAPDH in the nucleus. Competes with SIAH1 for binding GAPDH. Does not regulate lysosomal morphology and distribution. Binds to RAB10 following LRRK2-mediated RAB10 phosphorylation which leads to inhibition of ciliogenesis. The chain is RILP-like protein 1 (RILPL1) from Bos taurus (Bovine).